We begin with the raw amino-acid sequence, 520 residues long: O-methyltransferase cicE (520 aa).

S-adenosyl-L-methionine is bound by residues 300–301 (GG), Asp323, 355–356 (NF), and Arg371.

It belongs to the class I-like SAM-binding methyltransferase superfamily. Cation-independent O-methyltransferase family.

Its pathway is phytotoxin biosynthesis. Functionally, O-methyltransferase; part of the gene cluster that mediates the biosynthesis of cichorine, a phytotoxin active against knapweed, corn, and soybeans. The first step in the pathway is performed by the non-reducing polyketide synthase pkbA that condenses one acetyl-CoA starter unit with 3 malonyl-CoA units. PkbA also catalyzes one methylation step to produce 3-methylorsellinate. The nonribosomal peptide synthase-like protein cicB, the cytochrome P450 monooxygenase cicH and the O-methyltransferase cicE are involved in the conversion of 3-methylorsellinate into nidulol. CicB converts 3-methylorsellinate to a yet unidentified intermediate, cicH may play a ring-closing role for cichorine and cicE is plausibly responsible for the methylation of one of the phenol groups. The oxidoreductase cicC acts downstream with still unidentified enzymes to further convert nidulol into cichorine. This is O-methyltransferase cicE from Emericella nidulans (strain FGSC A4 / ATCC 38163 / CBS 112.46 / NRRL 194 / M139) (Aspergillus nidulans).